Here is a 259-residue protein sequence, read N- to C-terminus: 1,2-dihydroxy-1,2-dihydronaphthalene dehydrogenase (259 aa).

8–32 (SITGAGSGIGLELVRSFKSAGYYVS) lines the NAD(+) pocket. Ser140 lines the substrate pocket. The active-site Proton acceptor is Tyr153.

Belongs to the short-chain dehydrogenases/reductases (SDR) family.

The catalysed reaction is (1R,2S)-1,2-dihydronaphthalene-1,2-diol + NAD(+) = naphthalene-1,2-diol + NADH + H(+). It carries out the reaction cis-1,2-dihydroxy-1,2-dihydrodibenzothiophene + NAD(+) = 1,2-dihydroxydibenzothiophene + NADH + H(+). The protein operates within aromatic compound metabolism; naphthalene degradation. Catalyzes the oxidation of naphthalene dihydrodiol into 1,2-dihydroxynaphthalene. The chain is 1,2-dihydroxy-1,2-dihydronaphthalene dehydrogenase (doxE) from Pseudomonas sp. (strain C18).